The following is a 529-amino-acid chain: MAKNTITKTLKLRIVRPYNSAEVEKIVADEKNNREKIALEKNKDKVKEACSKHLKVAAYCTTQVERNACLFCKARKLDDKFYQKLRGQFPDAVFWQEISEIFRQLQKQAAEIYNQSLIELYYEIFIKGKGIANASSVEHYLSDVCYTRAAELFKNAAIASGLRSKIKSNFRLKELKNMKSGLPTTKSDNFPIPLVKQKGGQYTGFEISNHNSDFIIKIPFGRWQVKKEIDKYRPWEKFDFEQVQKSPKPISLLLSTQRRKRNKGWSKDEGTEAEIKKVMNGDYQTSYIEVKRGSKIGEKSAWMLNLSIDVPKIDKGVDPSIIGGIDVGVKSPLVCAINNAFSRYSISDNDLFHFNKKMFARRRILLKKNRHKRAGHGAKNKLKPITILTEKSERFRKKLIERWACEIADFFIKNKVGTVQMENLESMKRKEDSYFNIRLRGFWPYAEMQNKIEFKLKQYGIEIRKVAPNNTSKTCSKCGHLNNYFNFEYRKKNKFPHFKCEKCNFKENADYNAALNISNPKLKSTKEEP.

A zinc finger domain (ZF) region spans residues 1-95 (MAKNTITKTL…RGQFPDAVFW (95 aa)). 4 residues coordinate Zn(2+): Cys-50, His-53, Cys-69, and Cys-72. Residues 96–192 (QEISEIFRQL…PTTKSDNFPI (97 aa)) are recognition domain (REC). A wedge domain (WED) region spans residues 193-312 (PLVKQKGGQY…MLNLSIDVPK (120 aa)). The linker stretch occupies residues 313–321 (IDKGVDPSI). The interval 322 to 473 (IGGIDVGVKS…RKVAPNNTSK (152 aa)) is ruvC-I. Residues Asp-326 and Glu-422 contribute to the active site. Positions 474–508 (TCSKCGHLNNYFNFEYRKKNKFPHFKCEKCNFKEN) are target nucleic acid-binding (TNB). Zn(2+) contacts are provided by Cys-475 and Cys-478. Arg-490 is an active-site residue. Zn(2+) is bound by residues Cys-500 and Cys-503. The ruvC-II stretch occupies residues 509-529 (ADYNAALNISNPKLKSTKEEP). Residue Asp-510 is part of the active site.

Belongs to the CRISPR-associated endonuclease Cas12f family. As to quaternary structure, an asymmetric homodimer. Guide RNA is probably required for dimerization. It depends on Mg(2+) as a cofactor. Zn(2+) is required as a cofactor.

Its activity is regulated as follows. Target ssDNA cleavage is inhibited by EDTA. Activity is maximal with 5-50 mM NaCl, is less efficient at higher NaCl concentrations. Its function is as follows. CRISPR (clustered regularly interspaced short palindromic repeat), is an adaptive immune system that provides protection against mobile genetic elements (viruses, transposable elements and conjugative plasmids). CRISPR clusters contain sequences complementary to antecedent mobile elements and target invading nucleic acids. CRISPR clusters are transcribed and processed into CRISPR RNA (crRNA), which requires a trans-encoded small RNA (tracrRNA), but not this protein (in vitro). Upon expression in E.coli of this protein, a mini CRISPR array and the probable tracrRNA, the protein associates with both RNAs. The mini system is not active in E.coli against phiX174 phage, nor is it active in protection against transformation by foreign plasmids. In vitro the purified protein-tracrRNA-crRNA complex cleaves ssDNA complementary to the crRNA; target cleavage requires both tracrRNA and crRNA, but not a protospacer adjacent motif (PAM). The tracrRNA-crRNA can be replaced by a single guide RNA (sgRNA). 2-nucleotide mismatches in the middle of the crRNA:DNA heteroduplex decrease cleavage. Cleavage occurs just downstream of the heteroduplex. Activation of this protein results in non-specific ssDNA degradation in vitro. In vitro and in E.coli (coexpressed with sgRNA) has dsDNA endonuclease activity, recognizing the 5' PAM sequence TTTR; both sgRNA and a PAM are required for activity. Cleaves the target strand 24 and the nontarget strand 22 bases upstream of the PAM (respectively), resulting in 5' overhangs. The 2 monomers interact differently with the sgRNA and target DNA. Mutagenesis of a dimeric construct shows that one of the RuvC monomers probably cleaves both DNA strands. This chain is CRISPR-associated endodeoxyribonuclease Cas12f1, found in Uncultured archaeon.